Consider the following 408-residue polypeptide: Guanine nucleotide-binding protein alpha-14 subunit (408 aa).

GTP contacts are provided by residues 39-46 (HSEELEAK), 79-86 (GGPLSGKS), 201-205 (TRIAD), 216-222 (VHSRKAT), 241-245 (DVGGQ), 285-288 (FPKF), 325-328 (NKVD), and alanine 380. One can recognise a G-alpha domain in the interval 71-408 (SHIKILILGG…KANAKATGLS (338 aa)). Positions 74-87 (KILILGGPLSGKST) are G1 motif. Residue serine 86 coordinates Mg(2+). The G2 motif stretch occupies residues 214 to 222 (DIVHSRKAT). Position 222 (threonine 222) interacts with Mg(2+). Residues 237–246 (LLMIDVGGQR) form a G3 motif region. Residues 321 to 328 (LLFFNKVD) are G4 motif. The segment at 378–383 (TTATNT) is G5 motif.

It belongs to the G-alpha family. In terms of assembly, g proteins are composed of 3 units; alpha, beta and gamma. The alpha chain contains the guanine nucleotide binding site. Interacts with the dopamine receptor dop-2 (via C-terminus); the interaction is direct.

Functionally, guanine nucleotide-binding proteins (G proteins) are involved as modulators or transducers in various transmembrane signaling systems. In association with the G-protein coupled dopamine receptor dop-2, modulates two types of learning: touch habituation and chemosensory associative conditioning. This Caenorhabditis elegans protein is Guanine nucleotide-binding protein alpha-14 subunit.